A 143-amino-acid polypeptide reads, in one-letter code: Small ribosomal subunit protein bS6 (143 aa).

The tract at residues 100-143 (QSFIMKSKDDKGDKPERRRRDDDESGDVGVSNDSDNDGGNAEAA) is disordered. The segment covering 105-121 (KSKDDKGDKPERRRRDD) has biased composition (basic and acidic residues). The segment covering 126–143 (DVGVSNDSDNDGGNAEAA) has biased composition (low complexity).

The protein belongs to the bacterial ribosomal protein bS6 family.

Binds together with bS18 to 16S ribosomal RNA. This Xylella fastidiosa (strain M12) protein is Small ribosomal subunit protein bS6.